The primary structure comprises 638 residues: SUMO-activating enzyme subunit 2 (638 aa).

Residues 24-29 (GAGGIG), Asp48, 56-59 (NLNR), Lys72, 95-96 (SI), and 117-122 (DNRAAR) contribute to the ATP site. Residues Cys158 and Cys161 each coordinate Zn(2+). Residue Lys164 forms a Glycyl lysine isopeptide (Lys-Gly) (interchain with G-Cter in SUMO1) linkage. Catalysis depends on Cys173, which acts as the Glycyl thioester intermediate. Lys190 is covalently cross-linked (Glycyl lysine isopeptide (Lys-Gly) (interchain with G-Cter in SUMO)). The tract at residues 202–233 (ADQEVSPDRADPEAAWEPTEAEARARASNEDG) is disordered. The residue at position 207 (Ser207) is a Phosphoserine. The span at 222–233 (AEARARASNEDG) shows a compositional bias: basic and acidic residues. Lys236 is covalently cross-linked (Glycyl lysine isopeptide (Lys-Gly) (interchain with G-Cter in SUMO1); alternate). Glycyl lysine isopeptide (Lys-Gly) (interchain with G-Cter in SUMO2); alternate cross-links involve residues Lys236 and Lys257. Residues Lys257 and Lys271 each participate in a glycyl lysine isopeptide (Lys-Gly) (interchain with G-Cter in SUMO); alternate cross-link. Lys271 carries the N6-acetyllysine; alternate modification. Lys275 participates in a covalent cross-link: Glycyl lysine isopeptide (Lys-Gly) (interchain with G-Cter in SUMO). A Glycyl lysine isopeptide (Lys-Gly) (interchain with G-Cter in SUMO2) cross-link involves residue Lys369. Lys418 is covalently cross-linked (Glycyl lysine isopeptide (Lys-Gly) (interchain with G-Cter in SUMO1); alternate). Lys418 is covalently cross-linked (Glycyl lysine isopeptide (Lys-Gly) (interchain with G-Cter in SUMO2); alternate). Zn(2+)-binding residues include Cys439 and Cys442. The residue at position 505 (Ser505) is a Phosphoserine. Lys538 is covalently cross-linked (Glycyl lysine isopeptide (Lys-Gly) (interchain with G-Cter in SUMO2)). Residues Ser548 and Ser590 each carry the phosphoserine modification. Basic and acidic residues predominate over residues 548-561 (SPEKVGPKQAEDAA). Residues 548–638 (SPEKVGPKQA…EDPDDVIALD (91 aa)) are disordered. Residues 581–594 (EQDDVLIVDSDEEG) are compositionally biased toward acidic residues. The segment covering 603–614 (GDDKARKRKLEE) has biased composition (basic and acidic residues). Residue Lys609 forms a Glycyl lysine isopeptide (Lys-Gly) (interchain with G-Cter in SUMO) linkage. Lys611 participates in a covalent cross-link: Glycyl lysine isopeptide (Lys-Gly) (interchain with G-Cter in SUMO); alternate. Lys611 bears the N6-acetyllysine; alternate mark. Lys621 participates in a covalent cross-link: Glycyl lysine isopeptide (Lys-Gly) (interchain with G-Cter in SUMO). Residues 628 to 638 (MEDPDDVIALD) are compositionally biased toward acidic residues.

Belongs to the ubiquitin-activating E1 family. As to quaternary structure, heterodimer of SAE1 and UBA2/SAE2. The heterodimer corresponds to the two domains that are encoded on a single polypeptide chain in ubiquitin-activating enzyme E1. Interacts with UBE2I. Sumoylated with SUMO1 and SUMO2/3 and by UBC9. Sumoylation at Lys-236 inhibits enzymatic activity. Sumoylation at the C-terminal lysine cluster plays an essential role in nuclear trafficking. Broadly expressed, with highest levels in testis.

The protein resides in the cytoplasm. It is found in the nucleus. It participates in protein modification; protein sumoylation. Functionally, the heterodimer acts as an E1 ligase for SUMO1, SUMO2, SUMO3, and probably SUMO4. It mediates ATP-dependent activation of SUMO proteins followed by formation of a thioester bond between a SUMO protein and a conserved active site cysteine residue on UBA2/SAE2. This is SUMO-activating enzyme subunit 2 (Uba2) from Mus musculus (Mouse).